A 646-amino-acid polypeptide reads, in one-letter code: Chaperone protein DnaK (646 aa).

Position 198 is a phosphothreonine; by autocatalysis (T198). A disordered region spans residues 603 to 646 (EQAQQAGGAEGFDPNAFQGGDAGQQKADDGVVDAEFTEVKDDKK). The span at 618 to 627 (AFQGGDAGQQ) shows a compositional bias: low complexity.

Belongs to the heat shock protein 70 family.

Functionally, acts as a chaperone. This is Chaperone protein DnaK from Acinetobacter baumannii (strain ACICU).